The primary structure comprises 232 residues: Sugar fermentation stimulation protein homolog (232 aa).

The protein belongs to the SfsA family.

This Magnetococcus marinus (strain ATCC BAA-1437 / JCM 17883 / MC-1) protein is Sugar fermentation stimulation protein homolog.